The following is a 358-amino-acid chain: Pre-mRNA-splicing factor spp2 (358 aa).

Disordered regions lie at residues 1-250 (MTDQ…RAVP) and 298-358 (AWNQ…RGDR). Over residues 24–40 (KTKKPSRPTHTRRHHAR) the composition is skewed to basic residues. 2 stretches are compositionally biased toward basic and acidic residues: residues 80 to 137 (LENR…DASR) and 145 to 160 (RSRD…KDLQ). The segment covering 174–185 (NPKSTTTATSSF) has biased composition (polar residues). Composition is skewed to basic and acidic residues over residues 233–246 (SSHD…HSDY) and 309–358 (GDSR…RGDR).

The protein belongs to the SPP2 family. In terms of assembly, associated with the spliceosome.

Its subcellular location is the nucleus. In terms of biological role, involved in spliceosome maturation and the first step of pre-mRNA splicing. This Neurospora crassa (strain ATCC 24698 / 74-OR23-1A / CBS 708.71 / DSM 1257 / FGSC 987) protein is Pre-mRNA-splicing factor spp2 (msp-40).